We begin with the raw amino-acid sequence, 72 residues long: Toxin Acra II-2 (72 aa).

The region spanning 3–67 (VPGNYPLNTN…VWNAAKNYCK (65 aa)) is the LCN-type CS-alpha/beta domain. 3 cysteine pairs are disulfide-bonded: Cys-18–Cys-41, Cys-27–Cys-46, and Cys-31–Cys-48.

The protein belongs to the long (3 C-C) scorpion toxin superfamily. Sodium channel inhibitor family. Beta subfamily. Expressed by the venom gland.

The protein resides in the secreted. Binds to sodium channels (Nav) and affects the channel activation process. The chain is Toxin Acra II-2 from Androctonus crassicauda (Arabian fat-tailed scorpion).